A 377-amino-acid polypeptide reads, in one-letter code: Dihydroorotate dehydrogenase (quinone) (377 aa).

Residues 82–86 and T106 contribute to the FMN site; that span reads AGFDK. K86 lines the substrate pocket. Residue 131-135 coordinates substrate; sequence NRMGF. FMN contacts are provided by N159 and N192. N192 is a binding site for substrate. S195 serves as the catalytic Nucleophile. A substrate-binding site is contributed by N197. Residues K228 and T256 each coordinate FMN. 257-258 lines the substrate pocket; it reads NT. Residues G282, G311, and 332–333 each bind FMN; that span reads YT.

This sequence belongs to the dihydroorotate dehydrogenase family. Type 2 subfamily. In terms of assembly, monomer. The cofactor is FMN.

It localises to the cell membrane. It catalyses the reaction (S)-dihydroorotate + a quinone = orotate + a quinol. The protein operates within pyrimidine metabolism; UMP biosynthesis via de novo pathway; orotate from (S)-dihydroorotate (quinone route): step 1/1. Functionally, catalyzes the conversion of dihydroorotate to orotate with quinone as electron acceptor. The sequence is that of Dihydroorotate dehydrogenase (quinone) from Corynebacterium efficiens (strain DSM 44549 / YS-314 / AJ 12310 / JCM 11189 / NBRC 100395).